The following is a 472-amino-acid chain: Tryptophanase (472 aa).

Position 270 is an N6-(pyridoxal phosphate)lysine (lysine 270).

The protein belongs to the beta-eliminating lyase family. As to quaternary structure, homotetramer. Pyridoxal 5'-phosphate serves as cofactor.

The enzyme catalyses L-tryptophan + H2O = indole + pyruvate + NH4(+). The protein operates within amino-acid degradation; L-tryptophan degradation via pyruvate pathway; indole and pyruvate from L-tryptophan: step 1/1. The polypeptide is Tryptophanase (tnaA) (Vibrio cholerae serotype O1 (strain ATCC 39315 / El Tor Inaba N16961)).